Here is a 410-residue protein sequence, read N- to C-terminus: MAYLGLLSLVALQSLVTGAAFPDETIAEWSVNVYNHLRATGEDENILFSPLSIALAMGVMELGAQGSTLKEIRHSMGYESLKSGEEFSFLRDFSSMVSAEEGQYVMKIANSLFVQNGFHINEEFLQMMKMYFNAEVNHVDFSENVAVANYINKWVENYTNSLLKDLVSPGDFDAVTHLALINAVYFKGNWKSQFRPENTRTFSFTKDDESEVQIPMMYQQGEFYYGEFSDGSNEAGGIYQVLEIPYEGDEISMMLVLSRQEVPLATLEPLLKPQLIEEWANSVKKQKVEVYLPRFTVEQEIDLKDILKALGVTEIFIKDANLTAMSDKKELFLSKAVHKSFIEVNEEGSEAAVASGMIAISRMAVLFPQVIVDHPFLFLIKNRKTGTILFMGRVMHPETMNTSGHDFEEL.

A signal peptide spans 1 to 16 (MAYLGLLSLVALQSLV). Ser83 bears the Phosphoserine mark. Residues Asn157, Asn321, and Asn401 are each glycosylated (N-linked (GlcNAc...) asparagine). Ser403 carries O-linked (Xyl...) (chondroitin sulfate) serine glycosylation.

This sequence belongs to the serpin family. Detected in adult pituitary and adrenal gland.

Its subcellular location is the secreted. The protein localises to the cytoplasmic vesicle. The protein resides in the secretory vesicle lumen. It localises to the perikaryon. Its function is as follows. Serine protease inhibitor that inhibits plasminogen activators and plasmin but not thrombin. May be involved in the formation or reorganization of synaptic connections as well as for synaptic plasticity in the adult nervous system. May protect neurons from cell damage by tissue-type plasminogen activator. The sequence is that of Neuroserpin (Serpini1) from Rattus norvegicus (Rat).